A 335-amino-acid polypeptide reads, in one-letter code: Homeobox protein Hox-A1 (335 aa).

The interval 61–80 is disordered; sequence IGSPHHHHHHHHRHPQPATY. The segment covering 64–75 has biased composition (basic residues); that stretch reads PHHHHHHHHRHP. The interaction with OGT stretch occupies residues 75–203; it reads PQPATYQTSG…PASETSSPAQ (129 aa). Positions 204–209 match the Antp-type hexapeptide motif; sequence TFDWMK. Residues 229–288 constitute a DNA-binding region (homeobox); sequence PNAVRTNFTTKQLTELEKEFHFNKYLTRARRVEIAASLQLNETQVKIWFQNRRMKQKKRE. The tract at residues 281–335 is disordered; that stretch reads RMKQKKREKEGLLPISPATPPGNDEKAEESSEKSSSSPCVPSPGSSTSDTLTTSH. Over residues 303 to 312 the composition is skewed to basic and acidic residues; the sequence is NDEKAEESSE. Low complexity predominate over residues 313 to 328; sequence KSSSSPCVPSPGSSTS.

It belongs to the Antp homeobox family. Labial subfamily. Interacts with OGT (via TPR repeats domain); the interaction takes place mainly in the nucleus. Forms a DNA-binding heterodimer with transcription factor PBX1.

Its subcellular location is the nucleus. Sequence-specific transcription factor. Regulates multiple developmental processes including brainstem, inner and outer ear, abducens nerve and cardiovascular development and morphogenesis as well as cognition and behavior. Also part of a developmental regulatory system that provides cells with specific positional identities on the anterior-posterior axis. Acts on the anterior body structures. Seems to act in the maintenance and/or generation of hindbrain segments. Activates transcription in the presence of PBX1A and PKNOX1. This Homo sapiens (Human) protein is Homeobox protein Hox-A1 (HOXA1).